The chain runs to 120 residues: Large ribosomal subunit protein bL12 (120 aa).

The protein belongs to the bacterial ribosomal protein bL12 family. Homodimer. Part of the ribosomal stalk of the 50S ribosomal subunit. Forms a multimeric L10(L12)X complex, where L10 forms an elongated spine to which 2 to 4 L12 dimers bind in a sequential fashion. Binds GTP-bound translation factors.

Functionally, forms part of the ribosomal stalk which helps the ribosome interact with GTP-bound translation factors. Is thus essential for accurate translation. The protein is Large ribosomal subunit protein bL12 of Listeria monocytogenes serotype 4b (strain CLIP80459).